The following is a 133-amino-acid chain: Cytidine deaminase (133 aa).

Positions 3–131 (VDLDWVHHKL…EILKGGFRSY (129 aa)) constitute a CMP/dCMP-type deaminase domain. Residue 43–45 (NIE) participates in substrate binding. Cysteine 54 contacts Zn(2+). Glutamate 56 (proton donor) is an active-site residue. Zn(2+) is bound by residues cysteine 89 and cysteine 92.

Belongs to the cytidine and deoxycytidylate deaminase family. Homodimer. The cofactor is Zn(2+).

The catalysed reaction is cytidine + H2O + H(+) = uridine + NH4(+). It catalyses the reaction 2'-deoxycytidine + H2O + H(+) = 2'-deoxyuridine + NH4(+). Functionally, this enzyme scavenges exogenous and endogenous cytidine and 2'-deoxycytidine for UMP synthesis. This Mycoplasma pneumoniae (strain ATCC 29342 / M129 / Subtype 1) (Mycoplasmoides pneumoniae) protein is Cytidine deaminase (cdd).